Here is an 89-residue protein sequence, read N- to C-terminus: Small ribosomal subunit protein uS15 (89 aa).

The protein belongs to the universal ribosomal protein uS15 family. In terms of assembly, part of the 30S ribosomal subunit. Forms a bridge to the 50S subunit in the 70S ribosome, contacting the 23S rRNA.

One of the primary rRNA binding proteins, it binds directly to 16S rRNA where it helps nucleate assembly of the platform of the 30S subunit by binding and bridging several RNA helices of the 16S rRNA. In terms of biological role, forms an intersubunit bridge (bridge B4) with the 23S rRNA of the 50S subunit in the ribosome. This is Small ribosomal subunit protein uS15 from Nitratiruptor sp. (strain SB155-2).